A 178-amino-acid chain; its full sequence is Ribulose bisphosphate carboxylase small subunit, chloroplastic 4 (178 aa).

A chloroplast-targeting transit peptide spans 1-54; it reads MASISSTVATVSRAAPAQANMVAPFTGLKSNAAFPATKKANDFSTLPSNGGRVQ.

Belongs to the RuBisCO small chain family. Heterohexadecamer of 8 large and 8 small subunits.

The protein localises to the plastid. It localises to the chloroplast. In terms of biological role, ruBisCO catalyzes two reactions: the carboxylation of D-ribulose 1,5-bisphosphate, the primary event in carbon dioxide fixation, as well as the oxidative fragmentation of the pentose substrate. Both reactions occur simultaneously and in competition at the same active site. Although the small subunit is not catalytic it is essential for maximal activity. The sequence is that of Ribulose bisphosphate carboxylase small subunit, chloroplastic 4 from Flaveria pringlei.